Reading from the N-terminus, the 79-residue chain is Acyl carrier protein (79 aa).

The region spanning 2–77 (ESIEQRVKKI…QAIDYINSHG (76 aa)) is the Carrier domain. Ser37 carries the O-(pantetheine 4'-phosphoryl)serine modification.

The protein belongs to the acyl carrier protein (ACP) family. 4'-phosphopantetheine is transferred from CoA to a specific serine of apo-ACP by AcpS. This modification is essential for activity because fatty acids are bound in thioester linkage to the sulfhydryl of the prosthetic group.

It is found in the cytoplasm. The protein operates within lipid metabolism; fatty acid biosynthesis. Carrier of the growing fatty acid chain in fatty acid biosynthesis. The protein is Acyl carrier protein of Bordetella avium (strain 197N).